Reading from the N-terminus, the 377-residue chain is Histone deacetylase 8 (377 aa).

A histone deacetylase region spans residues 14–324; sequence LVPVYIYSPE…WTYLTGVILG (311 aa). Serine 39 carries the phosphoserine modification. Aspartate 101 is a substrate binding site. The active-site Proton acceptor is histidine 143. Glycine 151 contributes to the substrate binding site. Residues aspartate 178, histidine 180, and aspartate 267 each coordinate a divalent metal cation. A substrate-binding site is contributed by tyrosine 306.

This sequence belongs to the histone deacetylase family. HD type 1 subfamily. As to quaternary structure, interacts with PEPB2-MYH11, a fusion protein consisting of the 165 N-terminal residues of CBF-beta (PEPB2) with the tail region of MYH11 produced by the inversion Inv(16)(p13q22), a translocation associated with acute myeloid leukemia of M4EO subtype. The PEPB2-MYH1 fusion protein also interacts with RUNX1, a well known transcriptional regulator, suggesting that the interaction with HDAC8 may participate in the conversion of RUNX1 into a constitutive transcriptional repressor. Interacts with CBFA2T3. Interacts with phosphorylated SMG5/EST1B; this interaction protects SMG5 from ubiquitin-mediated degradation. Associates with alpha-SMA (smooth muscle alpha-actin). Requires a divalent metal cation as cofactor. Phosphorylated by PKA on serine 39. Phosphorylation reduces deacetylase activity observed preferentially on histones H3 and H4. Weakly expressed in most tissues. Expressed at higher level in heart, brain, kidney and pancreas and also in liver, lung, placenta, prostate and kidney.

It localises to the nucleus. Its subcellular location is the chromosome. The protein localises to the cytoplasm. The catalysed reaction is N(6)-acetyl-L-lysyl-[histone] + H2O = L-lysyl-[histone] + acetate. It carries out the reaction N(6)-acetyl-L-lysyl-[protein] + H2O = L-lysyl-[protein] + acetate. The enzyme catalyses N(6)-(2E)-butenoyl-L-lysyl-[protein] + H2O = (2E)-2-butenoate + L-lysyl-[protein]. Its activity is inhibited by trichostatin A (TSA), suberoylanilide hydroxamic acid (SAHA), 3-(1-methyl-4-phenylacetyl-1H-2-pyrrolyl)-N-hydroxy-2-propenamide (APHA), 4-dimethylamino-N-(6-hydroxycarbamoyethyl)benzamide-N-hydroxy-7-(4-dimethylaminobenzoyl)aminoheptanamide (MS-344), 5-(4-methyl-benzoylamino)-biphenyl-3,4'-dicarboxylic acid 3-dimethylamide 4'-hydroxyamide (CRA-A) and butyrate. Its function is as follows. Histone deacetylase that catalyzes the deacetylation of lysine residues on the N-terminal part of the core histones (H2A, H2B, H3 and H4). Histone deacetylation gives a tag for epigenetic repression and plays an important role in transcriptional regulation, cell cycle progression and developmental events. Histone deacetylases act via the formation of large multiprotein complexes. Also involved in the deacetylation of cohesin complex protein SMC3 regulating release of cohesin complexes from chromatin. May play a role in smooth muscle cell contractility. In addition to protein deacetylase activity, also has protein-lysine deacylase activity: acts as a protein decrotonylase by mediating decrotonylation ((2E)-butenoyl) of histones. The protein is Histone deacetylase 8 of Homo sapiens (Human).